The primary structure comprises 210 residues: MARYNGPLRVGIGGPVGSGKTALMDLLCKELRERYQIAAITNDIYTKWDAEFLVRSGSLTPDRIVGVETGGCPHTAIREDASMNLAAVADMRAKFPDLDLVLIESGGDNLAATFSPELADLTIYVIDVAAGDKIPSKGGPGITRSDLLVINKIDLAPYVGASLAKMEVDAKRMRGERPFVMTNLKQSAGLDRIIAFLEAKGGLQAEPVDA.

Position 14–21 (14–21) interacts with GTP; it reads GPVGSGKT.

The protein belongs to the SIMIBI class G3E GTPase family. UreG subfamily. Homodimer. UreD, UreF and UreG form a complex that acts as a GTP-hydrolysis-dependent molecular chaperone, activating the urease apoprotein by helping to assemble the nickel containing metallocenter of UreC. The UreE protein probably delivers the nickel.

It is found in the cytoplasm. Its function is as follows. Facilitates the functional incorporation of the urease nickel metallocenter. This process requires GTP hydrolysis, probably effectuated by UreG. In Rhodopseudomonas palustris (strain BisA53), this protein is Urease accessory protein UreG.